Here is a 324-residue protein sequence, read N- to C-terminus: Ig gamma-1 chain C region secreted form (324 aa).

The tract at residues 1–97 (AKTTPPSVYP…ASSTKVDKKI (97 aa)) is CH1. The cysteines at positions 27 and 82 are disulfide-linked. Residues 98–110 (VPRDCGCKPCICT) form a hinge region. The segment at 111-217 (VPEVSSVFIF…PIEKTISKTK (107 aa)) is CH2. 2 disulfide bridges follow: C138-C198 and C244-C302. N-linked (GlcNAc...) asparagine glycosylation is present at N174. The segment at 218-324 (GRPKAPQVYT…EKSLSHSPGK (107 aa)) is CH3.

The protein localises to the secreted. The chain is Ig gamma-1 chain C region secreted form (Ighg1) from Mus musculus (Mouse).